A 717-amino-acid polypeptide reads, in one-letter code: Delta-1-pyrroline-5-carboxylate synthase (717 aa).

The segment at 1 to 296 (METVDSTRAF…WASIGETDAR (296 aa)) is glutamate 5-kinase. Residues S60, D157, and N176 each coordinate substrate. Residues 196–197 (SD) and 236–242 (RGGMTAK) each bind ATP. A gamma-glutamyl phosphate reductase region spans residues 297–717 (EMAVAARACS…YSHKDLTQQG (421 aa)).

This sequence in the N-terminal section; belongs to the glutamate 5-kinase family. The protein in the C-terminal section; belongs to the gamma-glutamyl phosphate reductase family. In terms of tissue distribution, expressed at high levels in leaves and is inducible in roots subjected to salt stress.

It carries out the reaction L-glutamate + ATP = L-glutamyl 5-phosphate + ADP. It catalyses the reaction L-glutamate 5-semialdehyde + phosphate + NADP(+) = L-glutamyl 5-phosphate + NADPH + H(+). It functions in the pathway amino-acid biosynthesis; L-proline biosynthesis; L-glutamate 5-semialdehyde from L-glutamate: step 1/2. Its pathway is amino-acid biosynthesis; L-proline biosynthesis; L-glutamate 5-semialdehyde from L-glutamate: step 2/2. Feedback regulated by proline. Functionally, P5CS plays a key role in proline biosynthesis, leading to osmoregulation in plants. The protein is Delta-1-pyrroline-5-carboxylate synthase (PRO2) of Solanum lycopersicum (Tomato).